We begin with the raw amino-acid sequence, 309 residues long: Malate dehydrogenase (309 aa).

Residues Gly7–Gly12 and Asp32 each bind NAD(+). Residues Arg81 and Arg87 each contribute to the substrate site. NAD(+)-binding positions include Asn94 and Val117–Asn119. Substrate is bound by residues Asn119 and Arg150. The active-site Proton acceptor is the His174.

The protein belongs to the LDH/MDH superfamily. MDH type 3 family.

The enzyme catalyses (S)-malate + NAD(+) = oxaloacetate + NADH + H(+). In terms of biological role, catalyzes the reversible oxidation of malate to oxaloacetate. This is Malate dehydrogenase from Chlorobium phaeovibrioides (strain DSM 265 / 1930) (Prosthecochloris vibrioformis (strain DSM 265)).